The sequence spans 577 residues: Arginine--tRNA ligase (577 aa).

Positions 122–132 (PNVAKEMHVGH) match the 'HIGH' region motif.

It belongs to the class-I aminoacyl-tRNA synthetase family. Monomer.

It localises to the cytoplasm. The enzyme catalyses tRNA(Arg) + L-arginine + ATP = L-arginyl-tRNA(Arg) + AMP + diphosphate. The protein is Arginine--tRNA ligase of Escherichia coli O1:K1 / APEC.